Here is a 379-residue protein sequence, read N- to C-terminus: Succinyl-diaminopimelate desuccinylase (379 aa).

Residue His70 participates in Zn(2+) binding. Residue Asp72 is part of the active site. Zn(2+) is bound at residue Asp103. The active-site Proton acceptor is the Glu137. The Zn(2+) site is built by Glu138, Glu166, and His352.

It belongs to the peptidase M20A family. DapE subfamily. As to quaternary structure, homodimer. Zn(2+) serves as cofactor. Co(2+) is required as a cofactor.

The enzyme catalyses N-succinyl-(2S,6S)-2,6-diaminopimelate + H2O = (2S,6S)-2,6-diaminopimelate + succinate. Its pathway is amino-acid biosynthesis; L-lysine biosynthesis via DAP pathway; LL-2,6-diaminopimelate from (S)-tetrahydrodipicolinate (succinylase route): step 3/3. Its function is as follows. Catalyzes the hydrolysis of N-succinyl-L,L-diaminopimelic acid (SDAP), forming succinate and LL-2,6-diaminopimelate (DAP), an intermediate involved in the bacterial biosynthesis of lysine and meso-diaminopimelic acid, an essential component of bacterial cell walls. This is Succinyl-diaminopimelate desuccinylase from Shewanella baltica (strain OS223).